Reading from the N-terminus, the 660-residue chain is Acetyl-coenzyme A synthetase (660 aa).

Residues 197 to 200 (RGGK) and Thr-317 each bind CoA. ATP is bound by residues 397 to 399 (GEP), 421 to 426 (DTFWQT), Asp-512, and Arg-528. Residue Ser-536 coordinates CoA. Arg-539 is a binding site for ATP. Val-550 and Val-555 together coordinate Mg(2+). Residue Lys-625 is modified to N6-acetyllysine.

This sequence belongs to the ATP-dependent AMP-binding enzyme family. Mg(2+) is required as a cofactor. Post-translationally, acetylated. Deacetylation by the SIR2-homolog deacetylase activates the enzyme.

The enzyme catalyses acetate + ATP + CoA = acetyl-CoA + AMP + diphosphate. In terms of biological role, catalyzes the conversion of acetate into acetyl-CoA (AcCoA), an essential intermediate at the junction of anabolic and catabolic pathways. AcsA undergoes a two-step reaction. In the first half reaction, AcsA combines acetate with ATP to form acetyl-adenylate (AcAMP) intermediate. In the second half reaction, it can then transfer the acetyl group from AcAMP to the sulfhydryl group of CoA, forming the product AcCoA. In Ralstonia pickettii (strain 12J), this protein is Acetyl-coenzyme A synthetase.